A 636-amino-acid polypeptide reads, in one-letter code: Serine/threonine-protein kinase hal4 (636 aa).

Residues Met1–Ser11 show a composition bias toward basic and acidic residues. 2 disordered regions span residues Met1–Val167 and Ala181–Ala261. Over residues Glu33–Thr45 the composition is skewed to pro residues. Composition is skewed to polar residues over residues Ala56–Leu92 and Asn113–Lys124. The segment covering Pro140 to Ser155 has biased composition (low complexity). Over residues Ala182 to Thr226 the composition is skewed to polar residues. Ser218 carries the phosphoserine modification. Over residues Asn234–Ala261 the composition is skewed to low complexity. Thr238 and Thr241 each carry phosphothreonine. Ser299 bears the Phosphoserine mark. The Protein kinase domain occupies Gly351–Val623. Residues Ile357–Val365 and Lys385 each bind ATP. The Proton acceptor role is filled by Asp481.

The protein belongs to the protein kinase superfamily. Ser/Thr protein kinase family. In terms of assembly, interacts with sty1.

The protein localises to the cytoplasm. The catalysed reaction is L-seryl-[protein] + ATP = O-phospho-L-seryl-[protein] + ADP + H(+). It catalyses the reaction L-threonyl-[protein] + ATP = O-phospho-L-threonyl-[protein] + ADP + H(+). Promotes K(+) uptake, by the potassium transporter trk1-trk2, which leads to the subsequent cellular resistance to toxic cations such as Na(+), Li(+) and Ca(2+). This is Serine/threonine-protein kinase hal4 (hal4) from Schizosaccharomyces pombe (strain 972 / ATCC 24843) (Fission yeast).